The sequence spans 372 residues: 3-dehydroquinate synthase (372 aa).

Residues 113 to 117 (GVIGD), 137 to 138 (TS), Lys-150, Lys-159, and 177 to 180 (TLKT) each bind NAD(+). Zn(2+)-binding residues include Glu-192, His-257, and His-274.

Belongs to the sugar phosphate cyclases superfamily. Dehydroquinate synthase family. Co(2+) is required as a cofactor. Zn(2+) serves as cofactor. Requires NAD(+) as cofactor.

It localises to the cytoplasm. It carries out the reaction 7-phospho-2-dehydro-3-deoxy-D-arabino-heptonate = 3-dehydroquinate + phosphate. The protein operates within metabolic intermediate biosynthesis; chorismate biosynthesis; chorismate from D-erythrose 4-phosphate and phosphoenolpyruvate: step 2/7. In terms of biological role, catalyzes the conversion of 3-deoxy-D-arabino-heptulosonate 7-phosphate (DAHP) to dehydroquinate (DHQ). This Acaryochloris marina (strain MBIC 11017) protein is 3-dehydroquinate synthase.